The sequence spans 339 residues: N-acetylornithine carbamoyltransferase (339 aa).

Residues 49 to 52 (SMRT), Trp-77, and Arg-112 each bind carbamoyl phosphate. Glu-144 contacts N(2)-acetyl-L-ornithine. 148-151 (HPCQ) lines the carbamoyl phosphate pocket. Lys-252 and Leu-295 together coordinate N(2)-acetyl-L-ornithine. 294–295 (CL) serves as a coordination point for carbamoyl phosphate. Lys-302 carries the N6-carboxylysine modification. Arg-322 serves as a coordination point for carbamoyl phosphate.

It belongs to the aspartate/ornithine carbamoyltransferase superfamily. AOTCase family. Homotrimer.

The protein resides in the cytoplasm. It carries out the reaction N(2)-acetyl-L-ornithine + carbamoyl phosphate = N(2)-acetyl-L-citrulline + phosphate + H(+). It participates in amino-acid biosynthesis; L-arginine biosynthesis. Its activity is regulated as follows. Carboxylation at Lys-302 increases the catalytic activity of the enzyme. Is potently inhibited by N(alpha)-acetyl-N(delta)-phosphonoacetyl-L-ornithine (PALAO). Functionally, catalyzes the transfer of the carbamoyl group from carbamoyl phosphate to the delta-amino group of N(2)-acetyl-L-ornithine to produce N(2)-acetyl-L-citrulline. This is a step in an alternative arginine biosynthesis pathway. The enzyme has no activity with ornithine. The sequence is that of N-acetylornithine carbamoyltransferase from Xanthomonas campestris pv. campestris (strain ATCC 33913 / DSM 3586 / NCPPB 528 / LMG 568 / P 25).